The following is a 949-amino-acid chain: Translation initiation factor IF-2 (949 aa).

Disordered regions lie at residues 50 to 206 and 220 to 359; these read FTEK…GAAR and QNAE…TERK. 2 stretches are compositionally biased toward basic and acidic residues: residues 52-84 and 104-143; these read EKPKTETKPKIKAVDETPKPKLEAVKEEVKVEK and FKAEREARAKEQAARQKRNAQESTERRQDNRYQQKNDQGS. Composition is skewed to polar residues over residues 144–154 and 164–180; these read KNRNFNKSQGQ and GSQQNNRQDSRIASNKP. Positions 187–206 are enriched in low complexity; that stretch reads NAANRNQNNSQQERQVGAAR. Over residues 224 to 275 the composition is skewed to basic and acidic residues; sequence YMRHKETQLREQEEARRLAERAKEEARLAAQKAAEEKAKEAEKAAKTERFEP. The segment covering 319–336 has biased composition (low complexity); sequence KSWNNQNQVRNQRNSNWN. Residues 450–619 form the tr-type G domain; that stretch reads ERAPVVTIMG…LLVAEVEELK (170 aa). The segment at 459–466 is G1; sequence GHVDHGKT. 459-466 lines the GTP pocket; the sequence is GHVDHGKT. Residues 484-488 are G2; it reads GITQH. Positions 505-508 are G3; sequence DTPG. GTP contacts are provided by residues 505-509 and 559-562; these read DTPGH and NKID. Residues 559–562 are G4; it reads NKID. The segment at 595–597 is G5; it reads SAK.

It belongs to the TRAFAC class translation factor GTPase superfamily. Classic translation factor GTPase family. IF-2 subfamily.

Its subcellular location is the cytoplasm. In terms of biological role, one of the essential components for the initiation of protein synthesis. Protects formylmethionyl-tRNA from spontaneous hydrolysis and promotes its binding to the 30S ribosomal subunits. Also involved in the hydrolysis of GTP during the formation of the 70S ribosomal complex. This chain is Translation initiation factor IF-2, found in Streptococcus uberis (strain ATCC BAA-854 / 0140J).